The sequence spans 187 residues: Peptidyl-tRNA hydrolase (187 aa).

Y14 serves as a coordination point for tRNA. The active-site Proton acceptor is the H19. TRNA is bound by residues Y63 and N65.

The protein belongs to the PTH family. In terms of assembly, monomer.

The protein resides in the cytoplasm. The catalysed reaction is an N-acyl-L-alpha-aminoacyl-tRNA + H2O = an N-acyl-L-amino acid + a tRNA + H(+). In terms of biological role, hydrolyzes ribosome-free peptidyl-tRNAs (with 1 or more amino acids incorporated), which drop off the ribosome during protein synthesis, or as a result of ribosome stalling. Functionally, catalyzes the release of premature peptidyl moieties from peptidyl-tRNA molecules trapped in stalled 50S ribosomal subunits, and thus maintains levels of free tRNAs and 50S ribosomes. The sequence is that of Peptidyl-tRNA hydrolase from Thermodesulfovibrio yellowstonii (strain ATCC 51303 / DSM 11347 / YP87).